Here is a 361-residue protein sequence, read N- to C-terminus: D-malate dehydrogenase [decarboxylating] (361 aa).

Positions 224, 248, and 252 each coordinate Mn(2+).

Belongs to the isocitrate and isopropylmalate dehydrogenases family. Mg(2+) serves as cofactor. It depends on Mn(2+) as a cofactor.

The protein localises to the cytoplasm. It catalyses the reaction (R)-malate + NAD(+) = pyruvate + CO2 + NADH. Catalyzes the NAD(+)-dependent oxidative decarboxylation of D-malate into pyruvate. Is essential for aerobic growth on D-malate as the sole carbon source. But is not required for anaerobic D-malate utilization, although DmlA is expressed and active in those conditions. Appears to be not able to use L-tartrate as a substrate for dehydrogenation instead of D-malate. This is D-malate dehydrogenase [decarboxylating] (dmlA) from Escherichia coli (strain K12).